Consider the following 265-residue polypeptide: Cytochrome c oxidase subunit 3 (265 aa).

6 helical membrane passes run 16-36 (PWPF…ILWL), 40-60 (PSFL…FSWW), 83-103 (CVAL…WTFF), 159-179 (VGPF…FLVQ), 198-218 (VFYL…IWLM), and 241-261 (IWYW…VYVW).

It belongs to the cytochrome c oxidase subunit 3 family. As to quaternary structure, component of the cytochrome c oxidase (complex IV, CIV), a multisubunit enzyme composed of a catalytic core of 3 subunits and several supernumerary subunits. The complex exists as a monomer or a dimer and forms supercomplexes (SCs) in the inner mitochondrial membrane with ubiquinol-cytochrome c oxidoreductase (cytochrome b-c1 complex, complex III, CIII).

The protein resides in the mitochondrion inner membrane. It catalyses the reaction 4 Fe(II)-[cytochrome c] + O2 + 8 H(+)(in) = 4 Fe(III)-[cytochrome c] + 2 H2O + 4 H(+)(out). Its function is as follows. Component of the cytochrome c oxidase, the last enzyme in the mitochondrial electron transport chain which drives oxidative phosphorylation. The respiratory chain contains 3 multisubunit complexes succinate dehydrogenase (complex II, CII), ubiquinol-cytochrome c oxidoreductase (cytochrome b-c1 complex, complex III, CIII) and cytochrome c oxidase (complex IV, CIV), that cooperate to transfer electrons derived from NADH and succinate to molecular oxygen, creating an electrochemical gradient over the inner membrane that drives transmembrane transport and the ATP synthase. Cytochrome c oxidase is the component of the respiratory chain that catalyzes the reduction of oxygen to water. Electrons originating from reduced cytochrome c in the intermembrane space (IMS) are transferred via the dinuclear copper A center (CU(A)) of subunit 2 and heme A of subunit 1 to the active site in subunit 1, a binuclear center (BNC) formed by heme A3 and copper B (CU(B)). The BNC reduces molecular oxygen to 2 water molecules using 4 electrons from cytochrome c in the IMS and 4 protons from the mitochondrial matrix. The sequence is that of Cytochrome c oxidase subunit 3 (COIII) from Mytilus edulis (Blue mussel).